The sequence spans 165 residues: Cyclic pyranopterin monophosphate synthase (165 aa).

Substrate-binding positions include 76 to 78 and 119 to 120; these read LCH and ME. Asp134 is an active-site residue.

Belongs to the MoaC family. Homohexamer; trimer of dimers.

It carries out the reaction (8S)-3',8-cyclo-7,8-dihydroguanosine 5'-triphosphate = cyclic pyranopterin phosphate + diphosphate. It functions in the pathway cofactor biosynthesis; molybdopterin biosynthesis. Catalyzes the conversion of (8S)-3',8-cyclo-7,8-dihydroguanosine 5'-triphosphate to cyclic pyranopterin monophosphate (cPMP). This Photobacterium profundum (strain SS9) protein is Cyclic pyranopterin monophosphate synthase.